The sequence spans 246 residues: 3-deoxy-manno-octulosonate cytidylyltransferase (246 aa).

This sequence belongs to the KdsB family.

It localises to the cytoplasm. It carries out the reaction 3-deoxy-alpha-D-manno-oct-2-ulosonate + CTP = CMP-3-deoxy-beta-D-manno-octulosonate + diphosphate. Its pathway is nucleotide-sugar biosynthesis; CMP-3-deoxy-D-manno-octulosonate biosynthesis; CMP-3-deoxy-D-manno-octulosonate from 3-deoxy-D-manno-octulosonate and CTP: step 1/1. It participates in bacterial outer membrane biogenesis; lipopolysaccharide biosynthesis. Activates KDO (a required 8-carbon sugar) for incorporation into bacterial lipopolysaccharide in Gram-negative bacteria. The polypeptide is 3-deoxy-manno-octulosonate cytidylyltransferase (Rickettsia akari (strain Hartford)).